We begin with the raw amino-acid sequence, 143 residues long: Large ribosomal subunit protein uL11 (143 aa).

This sequence belongs to the universal ribosomal protein uL11 family. In terms of assembly, part of the ribosomal stalk of the 50S ribosomal subunit. Interacts with L10 and the large rRNA to form the base of the stalk. L10 forms an elongated spine to which L12 dimers bind in a sequential fashion forming a multimeric L10(L12)X complex. One or more lysine residues are methylated.

Forms part of the ribosomal stalk which helps the ribosome interact with GTP-bound translation factors. This is Large ribosomal subunit protein uL11 from Verminephrobacter eiseniae (strain EF01-2).